We begin with the raw amino-acid sequence, 112 residues long: T cell receptor alpha variable 2 (112 aa).

The first 25 residues, 1–25, serve as a signal peptide directing secretion; sequence MALQSTLGAVWLGLLLNSLWKVAES. Residues 26-112 form the Ig-like domain; it reads KDQVFQPSTV…DAAVYYCAVE (87 aa). A disulfide bridge links Cys-47 with Cys-109. 2 N-linked (GlcNAc...) asparagine glycosylation sites follow: Asn-48 and Asn-84.

In terms of assembly, alpha-beta TR is a heterodimer composed of an alpha and beta chain; disulfide-linked. The alpha-beta TR is associated with the transmembrane signaling CD3 coreceptor proteins to form the TR-CD3 (TcR or TCR). The assembly of alpha-beta TR heterodimers with CD3 occurs in the endoplasmic reticulum where a single alpha-beta TR heterodimer associates with one CD3D-CD3E heterodimer, one CD3G-CD3E heterodimer and one CD247 homodimer forming a stable octameric structure. CD3D-CD3E and CD3G-CD3E heterodimers preferentially associate with TR alpha and TR beta chains, respectively. The association of the CD247 homodimer is the last step of TcR assembly in the endoplasmic reticulum and is required for transport to the cell surface.

The protein localises to the cell membrane. In terms of biological role, v region of the variable domain of T cell receptor (TR) alpha chain that participates in the antigen recognition. Alpha-beta T cell receptors are antigen specific receptors which are essential to the immune response and are present on the cell surface of T lymphocytes. Recognize peptide-major histocompatibility (MH) (pMH) complexes that are displayed by antigen presenting cells (APC), a prerequisite for efficient T cell adaptive immunity against pathogens. Binding of alpha-beta TR to pMH complex initiates TR-CD3 clustering on the cell surface and intracellular activation of LCK that phosphorylates the ITAM motifs of CD3G, CD3D, CD3E and CD247 enabling the recruitment of ZAP70. In turn ZAP70 phosphorylates LAT, which recruits numerous signaling molecules to form the LAT signalosome. The LAT signalosome propagates signal branching to three major signaling pathways, the calcium, the mitogen-activated protein kinase (MAPK) kinase and the nuclear factor NF-kappa-B (NF-kB) pathways, leading to the mobilization of transcription factors that are critical for gene expression and essential for T cell growth and differentiation. The T cell repertoire is generated in the thymus, by V-(D)-J rearrangement. This repertoire is then shaped by intrathymic selection events to generate a peripheral T cell pool of self-MH restricted, non-autoaggressive T cells. Post-thymic interaction of alpha-beta TR with the pMH complexes shapes TR structural and functional avidity. This chain is T cell receptor alpha variable 2, found in Homo sapiens (Human).